Consider the following 235-residue polypeptide: Cobalt transport protein CbiM (235 aa).

An N-terminal signal peptide occupies residues 1–33; that stretch reads MRYLKFFLLLVFLVPSFGFSMHIMEGFLPPTHA. 6 helical membrane-spanning segments follow: residues 34–51, 63–83, 95–115, 118–138, 156–176, and 199–219; these read LIWYILSLPFFVIGLFTI, MLLAFVGAFTFVLSAMKIPSV, LGAIIFGPFTMTVIGTIVLLF, LLLAHGGLTTLGANTFSMAIV, NIAVFLAAFLGDLFTYVTTSF, and IFAITQVPLAIIEGLVTVVVI.

It belongs to the CbiM family. In terms of assembly, forms an energy-coupling factor (ECF) transporter complex composed of an ATP-binding protein (A component, CbiO), a transmembrane protein (T component, CbiQ) and 2 possible substrate-capture proteins (S components, CbiM and CbiN) of unknown stoichimetry.

It is found in the cell inner membrane. Its pathway is cofactor biosynthesis; adenosylcobalamin biosynthesis. Functionally, part of the energy-coupling factor (ECF) transporter complex CbiMNOQ involved in cobalt import. The chain is Cobalt transport protein CbiM from Thermosipho melanesiensis (strain DSM 12029 / CIP 104789 / BI429).